The sequence spans 312 residues: DNA-directed RNA polymerase subunit alpha (312 aa).

Residues 1–226 (MIEFEKPKIT…DHLNLFVDLS (226 aa)) form an alpha N-terminal domain (alpha-NTD) region. Positions 243-312 (TERVLDKIIE…ELGLSLKKRK (70 aa)) are alpha C-terminal domain (alpha-CTD).

Belongs to the RNA polymerase alpha chain family. In terms of assembly, homodimer. The RNAP catalytic core consists of 2 alpha, 1 beta, 1 beta' and 1 omega subunit. When a sigma factor is associated with the core the holoenzyme is formed, which can initiate transcription.

The enzyme catalyses RNA(n) + a ribonucleoside 5'-triphosphate = RNA(n+1) + diphosphate. Functionally, DNA-dependent RNA polymerase catalyzes the transcription of DNA into RNA using the four ribonucleoside triphosphates as substrates. The chain is DNA-directed RNA polymerase subunit alpha from Lactococcus lactis subsp. cremoris (strain MG1363).